The chain runs to 359 residues: 3-dehydroshikimate dehydratase (359 aa).

It belongs to the bacterial two-domain DSD family. In terms of assembly, monomer.

It carries out the reaction 3-dehydroshikimate = 3,4-dihydroxybenzoate + H2O. Its pathway is aromatic compound metabolism; 3,4-dihydroxybenzoate biosynthesis; 3,4-dihydroxybenzoate from 3-dehydroquinate: step 2/2. Divalent cations such as Mg(2+), but also MO(2+), Mn(2+), Ba(2+), and Co(2+) activate the enzyme, whereas monovalent cations as K(+), Na(+), and NH4(+) decrease its activity slightly. Functionally, 3-dehydroshikimate dehydratase; part of the qa gene cluster that mediates the catabolism of quinic acid (QA) and as such, allows the use of QA as a sole carbon source. Catalyzes the third reaction in the inducible quinic acid catabolic pathway by converting dehydroshikimate to protocatechuate. The qa cluster encodes 3 inducible enymes (qa-2, qa-3 and qa-4) catalyzing the first three reactions in the catabolism of quinic acid to protocatechuic acid (also known as 3,4-Dihydroxybenzoic acid). In Neurospora crassa (strain ATCC 24698 / 74-OR23-1A / CBS 708.71 / DSM 1257 / FGSC 987), this protein is 3-dehydroshikimate dehydratase.